We begin with the raw amino-acid sequence, 157 residues long: Regenerating islet-derived protein 4 (157 aa).

The N-terminal stretch at 1–22 is a signal peptide; sequence MASKGVRLLLLLSWVAGPEVLS. Cysteines 29 and 40 form a disulfide. One can recognise a C-type lectin domain in the interval 36–154; it reads YRSHCYGYFR…CANRQHFLCK (119 aa). Asn-49 and Asn-62 each carry an N-linked (GlcNAc...) asparagine glycan. Disulfide bonds link Cys-57-Cys-153 and Cys-128-Cys-145. Residues 97–102 and 134–136 contribute to the a carbohydrate site; these read DPQKKQ and KDK.

The protein resides in the secreted. Its function is as follows. Calcium-independent lectin displaying mannose-binding specificity and able to maintain carbohydrate recognition activity in an acidic environment. May be involved in inflammatory and metaplastic responses of the gastrointestinal epithelium. In Mus musculus (Mouse), this protein is Regenerating islet-derived protein 4 (Reg4).